Here is a 392-residue protein sequence, read N- to C-terminus: Glutamine synthetase (392 aa).

Residues 26-106 (VQVTYVWIDG…VMCEVLKYNR (81 aa)) enclose the GS beta-grasp domain. Residues 113–392 (LRHTCKKIME…MASPRDAAVF (280 aa)) enclose the GS catalytic domain. An ATP-binding site is contributed by E134. 4 residues coordinate Mn(2+): E134, E136, E196, and E203. An ATP-binding site is contributed by 203-208 (EFQVGP). 246–247 (NW) contributes to the L-glutamate binding site. H253 is a binding site for Mn(2+). ATP is bound by residues 255-257 (NYS), R319, and R324. Residue R319 participates in L-glutamate binding. 336–338 (YFE) is an ADP binding site. Position 338 (E338) interacts with Mn(2+). R340 contacts L-glutamate.

This sequence belongs to the glutamine synthetase family. Requires Mg(2+) as cofactor. Mn(2+) is required as a cofactor.

It is found in the cytoplasm. Its subcellular location is the cytosol. It localises to the microsome. The protein resides in the mitochondrion. It carries out the reaction L-glutamate + NH4(+) + ATP = L-glutamine + ADP + phosphate + H(+). In terms of biological role, glutamine synthetase that catalyzes the ATP-dependent conversion of glutamate and ammonia to glutamine. This Xenopus laevis (African clawed frog) protein is Glutamine synthetase.